The primary structure comprises 22 residues: Mu-conotoxin MIIIA (22 aa).

Gln-1 carries the post-translational modification Pyrrolidone carboxylic acid. 3 disulfide bridges follow: Cys-3/Cys-15, Cys-4/Cys-21, and Cys-10/Cys-22. Cysteine amide is present on Cys-22.

It belongs to the conotoxin M superfamily. Expressed by the venom duct.

It is found in the secreted. In terms of biological role, mu-conotoxins block voltage-gated sodium channels (Nav). This synthetic toxin potently blocks rNav1.3/SCN3A. It also moderately blocks rNav1.1/SCN1A, rNav1.2/SCN2A, rNav1.4/SCN4A, mNav1.6/SCN8A, and Nav1.7/SCN9A. sodium channels. This block is very slowly reversible. The chain is Mu-conotoxin MIIIA from Conus magus (Magical cone).